The chain runs to 295 residues: 4-diphosphocytidyl-2-C-methyl-D-erythritol kinase (295 aa).

Lysine 15 is an active-site residue. 102-112 (PIASGVGGGSS) contributes to the ATP binding site. Aspartate 144 is an active-site residue.

The protein belongs to the GHMP kinase family. IspE subfamily.

The enzyme catalyses 4-CDP-2-C-methyl-D-erythritol + ATP = 4-CDP-2-C-methyl-D-erythritol 2-phosphate + ADP + H(+). It functions in the pathway isoprenoid biosynthesis; isopentenyl diphosphate biosynthesis via DXP pathway; isopentenyl diphosphate from 1-deoxy-D-xylulose 5-phosphate: step 3/6. Functionally, catalyzes the phosphorylation of the position 2 hydroxy group of 4-diphosphocytidyl-2C-methyl-D-erythritol. The polypeptide is 4-diphosphocytidyl-2-C-methyl-D-erythritol kinase (Mesorhizobium japonicum (strain LMG 29417 / CECT 9101 / MAFF 303099) (Mesorhizobium loti (strain MAFF 303099))).